A 301-amino-acid chain; its full sequence is Immune-associated nucleotide-binding protein 5 (301 aa).

Residues 11 to 214 form the AIG1-type G domain; it reads EPVRNIVLVG…FTEENDLNEK (204 aa). The segment at 20–27 is G1; that stretch reads GPTGNGKS. 20–28 is a binding site for GTP; it reads GPTGNGKSS. A G2 region spans residues 46–50; the sequence is CKTCK. A G3 region spans residues 63–66; the sequence is DTPG. The interval 133–136 is G4; the sequence is TGGD. The tract at residues 172–174 is G5; the sequence is NNK. Asparagine 173 is a GTP binding site.

Belongs to the TRAFAC class TrmE-Era-EngA-EngB-Septin-like GTPase superfamily. AIG1/Toc34/Toc159-like paraseptin GTPase family. IAN subfamily. Expressed in pollen, cotyledons and lateral roots.

The sequence is that of Immune-associated nucleotide-binding protein 5 from Arabidopsis thaliana (Mouse-ear cress).